The primary structure comprises 478 residues: Cysteine--tRNA ligase (478 aa).

Zn(2+) is bound at residue C29. Positions 31–41 (PTVYDIPHIGN) match the 'HIGH' region motif. Residues C216, H241, and E245 each contribute to the Zn(2+) site. The 'KMSKS' region signature appears at 274–278 (KMSKS). K277 serves as a coordination point for ATP.

The protein belongs to the class-I aminoacyl-tRNA synthetase family. In terms of assembly, monomer. Zn(2+) serves as cofactor.

The protein resides in the cytoplasm. It catalyses the reaction tRNA(Cys) + L-cysteine + ATP = L-cysteinyl-tRNA(Cys) + AMP + diphosphate. In Orientia tsutsugamushi (strain Ikeda) (Rickettsia tsutsugamushi), this protein is Cysteine--tRNA ligase.